Here is a 236-residue protein sequence, read N- to C-terminus: Glucosamine-6-phosphate deaminase (236 aa).

The Proton acceptor; for enolization step role is filled by D62. Residue N128 is the For ring-opening step of the active site. H130 acts as the Proton acceptor; for ring-opening step in catalysis. E135 acts as the For ring-opening step in catalysis.

The protein belongs to the glucosamine/galactosamine-6-phosphate isomerase family. NagB subfamily.

The catalysed reaction is alpha-D-glucosamine 6-phosphate + H2O = beta-D-fructose 6-phosphate + NH4(+). It functions in the pathway amino-sugar metabolism; N-acetylneuraminate degradation; D-fructose 6-phosphate from N-acetylneuraminate: step 5/5. Catalyzes the reversible isomerization-deamination of glucosamine 6-phosphate (GlcN6P) to form fructose 6-phosphate (Fru6P) and ammonium ion. The chain is Glucosamine-6-phosphate deaminase from Lacticaseibacillus paracasei (strain ATCC 334 / BCRC 17002 / CCUG 31169 / CIP 107868 / KCTC 3260 / NRRL B-441) (Lactobacillus paracasei).